We begin with the raw amino-acid sequence, 470 residues long: Isocitrate dehydrogenase (NAD(+)), mitochondrial (470 aa).

The transit peptide at 1–26 directs the protein to the mitochondrion; sequence MTRVERGRVLARAIERAVAHRASARR. NAD(+)-binding positions include 138 to 140 and N159; that span reads TVT. Residues 157 to 163, R193, Y200, K275, and D319 contribute to the D-threo-isocitrate site; that span reads SPNGAMR. D319 serves as a coordination point for Mg(2+). Position 324 (K324) interacts with NAD(+). D343 contacts D-threo-isocitrate. Positions 343 and 347 each coordinate Mg(2+). NAD(+) is bound by residues 380 to 385 and N399; that span reads HGTVAD.

It belongs to the isocitrate and isopropylmalate dehydrogenases family. As to quaternary structure, forms homodimers. Mg(2+) serves as cofactor. It depends on Mn(2+) as a cofactor.

The protein localises to the mitochondrion. The enzyme catalyses D-threo-isocitrate + NAD(+) = 2-oxoglutarate + CO2 + NADH. With respect to regulation, the homodimer exhibits allosteric regulation by isocitrate. In terms of biological role, performs an essential role in the oxidative function of the tricarboxylic acid cycle and respiration. Catalyzes the decarboxylation of isocitrate to produce 2-oxoglutarate and generate NADH to provide electrons for energy production. This chain is Isocitrate dehydrogenase (NAD(+)), mitochondrial, found in Ostreococcus tauri.